The primary structure comprises 342 residues: Ubiquitin fusion degradation protein 1 homolog (342 aa).

2 disordered regions span residues 245–276 (FGGA…SNAA) and 318–342 (EKEA…RGAR). Positions 259–275 (SSSVSLSDGTGVSTSNA) are enriched in polar residues.

The protein belongs to the UFD1 family. In terms of assembly, forms a complex composed of ubxn-3, ufd-1, npl-4.1 and cdc-48.1; within the complex interacts with cdc-48.1. Interacts with cdc-48.2. Interacts with npl-4.1 and/or npl-4.2.

The protein localises to the cytoplasm. It is found in the nucleus. Functionally, functions at a post-ubiquitination step in the ubiquitin fusion degradation (UFD) pathway. In association with npl-4.1 and/or npl-4.2 and ATPase cdc-48.1 and/or cdc-48.2, involved in the cytoplasmic elimination of misfolded proteins exported from the ER. This pathway, known as ERAD, prevents the activation of the unfolded protein response (UPR) caused by the accumulation of misfolded proteins in the ER. During S phase and in association with npl-4.1 and/or npl-4.2, cdc-48.1 and/or cdc-48.2 and ubxn-3, ensures the degradation of DNA licensing factor cdt-1 after the initiation of DNA replication and thus the disassembly of the DNA replication CMG helicase complex by promoting the dissociation from chromatin of several of its components including cdc-45 and sld-5. Regulates ubxn-3 nuclear localization during S phase. This Caenorhabditis elegans protein is Ubiquitin fusion degradation protein 1 homolog (ufd-1).